A 291-amino-acid chain; its full sequence is uncharacterized protein (291 aa).

Belongs to the pseudouridine synthase RluA family.

The enzyme catalyses a uridine in RNA = a pseudouridine in RNA. This is an uncharacterized protein from Synechocystis sp. (strain ATCC 27184 / PCC 6803 / Kazusa).